The sequence spans 756 residues: Tubulin glycylase 3B (756 aa).

The segment at 104–123 is disordered; it reads TPLPRTVTSSPTAPEAQKRQ. Residues 272–629 form the TTL domain; that stretch reads LEERMAFIED…DLPKNPTAAT (358 aa). ATP is bound by residues 440-443, lysine 453, and aspartate 455; that span reads QKYI. Residues 709-736 form a disordered region; the sequence is ITKKKKLSASAGSSTAASAQPSTQNLTT. Residues 716–727 show a composition bias toward low complexity; sequence SASAGSSTAASA.

It is found in the cytoplasm. The protein localises to the cytoskeleton. Its subcellular location is the nucleus. Functionally, essential glycylase which modifies both tubulin and non-tubulin proteins, generating side chains of glycine on the gamma-carboxyl groups of specific glutamate residues of target proteins. Monoglycylates alpha-tubulin by adding a single glycine chain to generate monoglycine side chains, but is not involved in elongation step to generate polyglycine side chains on alpha-tubulin. Has the ability to both mono- and polyglycylate non-tubulin proteins such as up (Troponin T). Required for early steps of spermatogenesis. The sequence is that of Tubulin glycylase 3B (TTLL3B) from Drosophila melanogaster (Fruit fly).